The chain runs to 321 residues: High osmolarity signaling protein SHO1A (321 aa).

Residues 1–28 are Cytoplasmic-facing; it reads MDYNNNRYGGGGGGSKFNLGHIVGDPFS. A helical transmembrane segment spans residues 29–49; sequence LATIAIATAGWLIAFVSSIIA. The Extracellular portion of the chain corresponds to 50 to 58; that stretch reads NIDQEYPNY. N-linked (GlcNAc...) asparagine glycosylation is present at N57. A helical transmembrane segment spans residues 59–79; it reads SWWALAYMFFVILGVTFAVAA. Position 80 (N80) is a topological domain, cytoplasmic. Residues 81 to 101 traverse the membrane as a helical segment; the sequence is AVYTYHVAMVGFLAAGLVFTT. Residues 102–116 lie on the Extracellular side of the membrane; that stretch reads SSVNSLIYWSDKAKQ. The helical transmembrane segment at 117–137 threads the bilayer; the sequence is AAAAGFILLSMVSIVWIFYFG. Topologically, residues 138-321 are cytoplasmic; that stretch reads SQPTASHRQT…IAPSNYLILL (184 aa). 2 disordered regions span residues 155 to 181 and 194 to 261; these read KDHA…AQHP and TSSP…QQPT. Polar residues-rich tracts occupy residues 165-181 and 225-237; these read HMTQ…AQHP and NFSN…PITS. Over residues 238–249 the composition is skewed to low complexity; that stretch reads QNNPQNQHQQPQ. Residues 250 to 261 are compositionally biased toward polar residues; that stretch reads DLTSPSTTQQPT. The SH3 domain maps to 262–321; that stretch reads EYPYRAKAIYSYEANPDDANEISFNKHEILEVSDVSGRWWQAKKENGETGIAPSNYLILL.

It belongs to the SHO1 family. In terms of assembly, forms homooligomers.

Its subcellular location is the cell membrane. Plasma membrane osmosensor that activates the high osmolarity glycerol (HOG) MAPK signaling pathway in response to high osmolarity. The protein is High osmolarity signaling protein SHO1A (SHO1A) of Hortaea werneckii.